The primary structure comprises 134 residues: Small ribosomal subunit protein uS8c (134 aa).

The protein belongs to the universal ribosomal protein uS8 family. Part of the 30S ribosomal subunit.

It is found in the plastid. Its function is as follows. One of the primary rRNA binding proteins, it binds directly to 16S rRNA central domain where it helps coordinate assembly of the platform of the 30S subunit. The protein is Small ribosomal subunit protein uS8c (rps8) of Cuscuta obtusiflora (Peruvian dodder).